A 1099-amino-acid polypeptide reads, in one-letter code: Sodium/potassium/calcium exchanger 1 (1099 aa).

Residues Met-1–Gln-452 are Extracellular-facing. Residues Pro-123–Ala-134 are compositionally biased toward polar residues. 3 disordered regions span residues Pro-123–Thr-150, Thr-169–Thr-199, and Pro-284–Pro-304. Asn-290 carries N-linked (GlcNAc...) asparagine glycosylation. Residues Gly-453–Cys-473 traverse the membrane as a helical segment. Topologically, residues Asp-474–Ala-497 are cytoplasmic. An Alpha-1 repeat occupies Val-494 to Phe-534. A helical transmembrane segment spans residues Thr-498–Ile-518. The Extracellular segment spans residues Ser-519–Asn-522. A helical membrane pass occupies residues Val-523–Cys-543. The Cytoplasmic segment spans residues Ser-544–Ser-563. Residues Phe-564 to Trp-584 form a helical membrane-spanning segment. Position 585 (Glu-585) is a topological domain, extracellular. The chain crosses the membrane as a helical span at residues Ser-586–Ile-606. Topologically, residues Glu-607–Lys-907 are cytoplasmic. Phosphoserine is present on Ser-658. The segment at Glu-690–Trp-901 is disordered. Thr-724 carries the post-translational modification Phosphothreonine. A compositionally biased stretch (acidic residues) spans Pro-757–Thr-769. Basic and acidic residues-rich tracts occupy residues Glu-813–Glu-825 and Ala-835–Glu-849. Positions Gly-857 to Gly-892 are enriched in acidic residues. Residues Gln-908–Val-928 traverse the membrane as a helical segment. The Extracellular portion of the chain corresponds to Arg-929–Lys-935. The chain crosses the membrane as a helical span at residues Phe-936–Val-956. The Cytoplasmic portion of the chain corresponds to Trp-957–Glu-971. The helical transmembrane segment at Ile-972–Ile-992 threads the bilayer. Residues Ala-979 to Asn-1010 form an Alpha-2 repeat. At Val-993 to Asn-1010 the chain is on the extracellular side. The helical transmembrane segment at Ile-1011–Leu-1031 threads the bilayer. Residues Gln-1032 to Asn-1039 lie on the Cytoplasmic side of the membrane. A helical transmembrane segment spans residues Gly-1040 to Ala-1060. The Extracellular portion of the chain corresponds to Ser-1061–Lys-1068. Residues Ile-1069–Glu-1089 traverse the membrane as a helical segment. The Cytoplasmic segment spans residues Asp-1090–Val-1099.

This sequence belongs to the Ca(2+):cation antiporter (CaCA) (TC 2.A.19) family. SLC24A subfamily. In terms of processing, the uncleaved signal sequence is required for efficient membrane targeting and proper membrane integration. Expressed in the retina, particularly in the inner segment, outer and inner nuclear layers, and ganglion cell layer.

The protein localises to the cell membrane. The enzyme catalyses Ca(2+)(out) + K(+)(out) + 4 Na(+)(in) = Ca(2+)(in) + K(+)(in) + 4 Na(+)(out). In terms of biological role, calcium, potassium:sodium antiporter that transports 1 Ca(2+) and 1 K(+) in exchange for 4 Na(+). Critical component of the visual transduction cascade, controlling the calcium concentration of outer segments during light and darkness. Light causes a rapid lowering of cytosolic free calcium in the outer segment of both retinal rod and cone photoreceptors and the light-induced lowering of calcium is caused by extrusion via this protein which plays a key role in the process of light adaptation. This Homo sapiens (Human) protein is Sodium/potassium/calcium exchanger 1.